A 173-amino-acid polypeptide reads, in one-letter code: Bifunctional protein PyrR (173 aa).

A PRPP-binding motif is present at residues 93-105 (VILVDDVLYTGRT).

It belongs to the purine/pyrimidine phosphoribosyltransferase family. PyrR subfamily. Homodimer and homohexamer; in equilibrium.

It carries out the reaction UMP + diphosphate = 5-phospho-alpha-D-ribose 1-diphosphate + uracil. Functionally, regulates transcriptional attenuation of the pyrimidine nucleotide (pyr) operon by binding in a uridine-dependent manner to specific sites on pyr mRNA. This disrupts an antiterminator hairpin in the RNA and favors formation of a downstream transcription terminator, leading to a reduced expression of downstream genes. Its function is as follows. Also displays a weak uracil phosphoribosyltransferase activity which is not physiologically significant. In Streptococcus suis (strain 05ZYH33), this protein is Bifunctional protein PyrR.